The sequence spans 443 residues: Xaa-Pro dipeptidase (443 aa).

Residues D246, D257, H339, E384, and E423 each contribute to the Mn(2+) site.

This sequence belongs to the peptidase M24B family. Bacterial-type prolidase subfamily. Mn(2+) is required as a cofactor.

It carries out the reaction Xaa-L-Pro dipeptide + H2O = an L-alpha-amino acid + L-proline. In terms of biological role, splits dipeptides with a prolyl residue in the C-terminal position. This is Xaa-Pro dipeptidase from Escherichia coli O7:K1 (strain IAI39 / ExPEC).